The primary structure comprises 123 residues: Proteasome assembly chaperone 4 (123 aa).

It belongs to the PSMG4 family. In terms of assembly, interacts with PSMG3. Associates with alpha subunits of the 20S proteasome.

Its function is as follows. Chaperone protein which promotes assembly of the 20S proteasome. The polypeptide is Proteasome assembly chaperone 4 (Homo sapiens (Human)).